Here is a 310-residue protein sequence, read N- to C-terminus: D-alanine--D-alanine ligase (310 aa).

One can recognise an ATP-grasp domain in the interval 107–302 (KQAFQAARLT…FEDLVERILA (196 aa)). 135 to 188 (EFSLPVVVKPSQEGSSVGVSIVKKESEFAAAMKEAFRYDREILVEQFIKGSEVQ) serves as a coordination point for ATP. 3 residues coordinate Mg(2+): Asp-256, Glu-269, and Asn-271.

It belongs to the D-alanine--D-alanine ligase family. Mg(2+) is required as a cofactor. The cofactor is Mn(2+).

Its subcellular location is the cytoplasm. It carries out the reaction 2 D-alanine + ATP = D-alanyl-D-alanine + ADP + phosphate + H(+). The protein operates within cell wall biogenesis; peptidoglycan biosynthesis. Cell wall formation. The protein is D-alanine--D-alanine ligase of Geotalea uraniireducens (strain Rf4) (Geobacter uraniireducens).